The sequence spans 460 residues: Probable protein phosphatase 2C 38 (460 aa).

Disordered stretches follow at residues 1–30 (MVAV…AVPS) and 83–111 (RPMR…GRIA). The segment covering 100–109 (PRDREPRDGR) has biased composition (basic and acidic residues). In terms of domain architecture, PPM-type phosphatase spans 118-432 (AASLYTMRGN…DDCAVVCLFL (315 aa)). Residues D154 and G155 each contribute to the Mn(2+) site. The interval 192-219 (VTSSMTEGGGTERMDRDTETPLGTEENG) is disordered. Residues 201-210 (GTERMDRDTE) are compositionally biased toward basic and acidic residues. Mn(2+)-binding residues include D377 and D423.

This sequence belongs to the PP2C family. Mg(2+) serves as cofactor. The cofactor is Mn(2+).

The catalysed reaction is O-phospho-L-seryl-[protein] + H2O = L-seryl-[protein] + phosphate. It catalyses the reaction O-phospho-L-threonyl-[protein] + H2O = L-threonyl-[protein] + phosphate. This is Probable protein phosphatase 2C 38 from Oryza sativa subsp. japonica (Rice).